A 171-amino-acid chain; its full sequence is Disulfide bond formation protein B (171 aa).

Topologically, residues 1 to 13 (MTFISNLADTRLA) are cytoplasmic. Residues 14–30 (WGLLFLSALVLVAYALF) form a helical membrane-spanning segment. The Periplasmic portion of the chain corresponds to 31–48 (SQHAMGLQPCIMCIYQRT). Cys40 and Cys43 are oxidised to a cystine. The chain crosses the membrane as a helical span at residues 49 to 63 (AIFGIMFACVPVLAA). Over 64–70 (NNMLTRL) the chain is Cytoplasmic. Residues 71–88 (FAFTVWGISAIWGGLIAW) traverse the membrane as a helical segment. Topologically, residues 89-144 (EHYDIQNAANPFFATCEIVPNFPSWLPLHEWLPNLFAATGDCGNIDWVFMDMSMPQ) are periplasmic. Cys104 and Cys130 form a disulfide bridge. A helical transmembrane segment spans residues 145 to 163 (WMMVVFAIYSSIWFVVLAS). The Cytoplasmic portion of the chain corresponds to 164–171 (RLIGNRAI).

Belongs to the DsbB family.

The protein resides in the cell inner membrane. In terms of biological role, required for disulfide bond formation in some periplasmic proteins. Acts by oxidizing the DsbA protein. The chain is Disulfide bond formation protein B from Pseudoalteromonas atlantica (strain T6c / ATCC BAA-1087).